The chain runs to 233 residues: DNA repair protein RecO (233 aa).

This sequence belongs to the RecO family.

In terms of biological role, involved in DNA repair and RecF pathway recombination. The polypeptide is DNA repair protein RecO (Pseudomonas aeruginosa (strain LESB58)).